The following is a 270-amino-acid chain: Aliphatic sulfonates import ATP-binding protein SsuB 3 (270 aa).

In terms of domain architecture, ABC transporter spans 17–238 (LAVRKLKKAF…VRGSHRLAAL (222 aa)). 49 to 56 (GRSGCGKS) contributes to the ATP binding site.

It belongs to the ABC transporter superfamily. Aliphatic sulfonates importer (TC 3.A.1.17.2) family. As to quaternary structure, the complex is composed of two ATP-binding proteins (SsuB), two transmembrane proteins (SsuC) and a solute-binding protein (SsuA).

The protein localises to the cell inner membrane. The catalysed reaction is ATP + H2O + aliphatic sulfonate-[sulfonate-binding protein]Side 1 = ADP + phosphate + aliphatic sulfonateSide 2 + [sulfonate-binding protein]Side 1.. Functionally, part of the ABC transporter complex SsuABC involved in aliphatic sulfonates import. Responsible for energy coupling to the transport system. The protein is Aliphatic sulfonates import ATP-binding protein SsuB 3 of Pseudomonas syringae pv. syringae (strain B728a).